Here is a 627-residue protein sequence, read N- to C-terminus: Chaperone protein HtpG (627 aa).

An a; substrate-binding region spans residues 1–343 (MATQEFQAET…SEDLSLNISR (343 aa)). The b stretch occupies residues 344-553 (EMLQQDKQLK…EGEISIEMEK (210 aa)). Residues 554-627 (VLQSMPNNQN…YTNNVCKIMS (74 aa)) form a c region.

The protein belongs to the heat shock protein 90 family. Homodimer.

It localises to the cytoplasm. Functionally, molecular chaperone. Has ATPase activity. The protein is Chaperone protein HtpG of Natranaerobius thermophilus (strain ATCC BAA-1301 / DSM 18059 / JW/NM-WN-LF).